Reading from the N-terminus, the 99-residue chain is L-rhamnose mutarotase (99 aa).

Tyr-18 serves as a coordination point for substrate. Residue His-22 is the Proton donor of the active site. Substrate-binding positions include Tyr-41 and 76 to 77 (WW).

It belongs to the rhamnose mutarotase family. In terms of assembly, homodimer.

It localises to the cytoplasm. The catalysed reaction is alpha-L-rhamnose = beta-L-rhamnose. Its pathway is carbohydrate metabolism; L-rhamnose metabolism. Functionally, involved in the anomeric conversion of L-rhamnose. This is L-rhamnose mutarotase from Shigella boydii serotype 18 (strain CDC 3083-94 / BS512).